The chain runs to 192 residues: Xanthine phosphoribosyltransferase (192 aa).

Positions 20 and 27 each coordinate xanthine. 5-phospho-alpha-D-ribose 1-diphosphate is bound at residue 128–132 (ADGEA). K156 is a xanthine binding site.

It belongs to the purine/pyrimidine phosphoribosyltransferase family. Xpt subfamily. As to quaternary structure, homodimer.

The protein localises to the cytoplasm. It carries out the reaction XMP + diphosphate = xanthine + 5-phospho-alpha-D-ribose 1-diphosphate. It functions in the pathway purine metabolism; XMP biosynthesis via salvage pathway; XMP from xanthine: step 1/1. Its function is as follows. Converts the preformed base xanthine, a product of nucleic acid breakdown, to xanthosine 5'-monophosphate (XMP), so it can be reused for RNA or DNA synthesis. The protein is Xanthine phosphoribosyltransferase of Agathobacter rectalis (strain ATCC 33656 / DSM 3377 / JCM 17463 / KCTC 5835 / VPI 0990) (Eubacterium rectale).